Reading from the N-terminus, the 1337-residue chain is Multidrug resistance protein fer6 (1337 aa).

An N-terminal signal peptide occupies residues 1 to 23; the sequence is MTPEASANWFSLCWFAWIDPILT. N-linked (GlcNAc...) asparagine glycosylation is present at asparagine 71. Transmembrane regions (helical) follow at residues 94 to 114 and 138 to 158; these read FWIG…SPLL and LGSG…CVFL. Positions 95–386 constitute an ABC transmembrane type-1 1 domain; that stretch reads WIGGLLKLLA…LPIAWNAIVD (292 aa). A glycan (N-linked (GlcNAc...) asparagine) is linked at asparagine 187. 4 consecutive transmembrane segments (helical) span residues 220-242, 247-269, 331-351, and 359-379; these read FFHM…IWSL, LPGI…RLFA, ALAF…YALV, and ILFS…FLPI. One can recognise an ABC transporter 1 domain in the interval 417-667; sequence IQLEDASFTW…KGRVAELLLT (251 aa). The segment at 432–460 is disordered; it reads ADTAKPVNEKKGQDSPSNEKETPVDRAST. The segment covering 438–455 has biased composition (basic and acidic residues); that stretch reads VNEKKGQDSPSNEKETPV. A glycan (N-linked (GlcNAc...) asparagine) is linked at asparagine 465. Residue 478–485 participates in ATP binding; sequence GGVGSGKS. The tract at residues 699 to 751 is disordered; it reads GSASNRNSEASESTTTTVNAESKDTSNAEGVTNKTEKKDLVAPPAQAKSKALM. The span at 700 to 718 shows a compositional bias: low complexity; sequence SASNRNSEASESTTTTVNA. Asparagine 731 carries an N-linked (GlcNAc...) asparagine glycan. 6 helical membrane passes run 769–789, 817–837, 890–909, 915–933, 999–1019, and 1028–1048; these read YLNA…VLVF, GIYA…GVIF, AMRT…VLIA, FLIP…AAYY, LSVR…ILVV, and GETG…GWMI. In terms of domain architecture, ABC transmembrane type-1 2 spans 781–1056; that stretch reads LFLVAVLVFQ…MIRHAAELEN (276 aa). Asparagine 1057 carries N-linked (GlcNAc...) asparagine glycosylation. The region spanning 1097-1325 is the ABC transporter 2 domain; sequence IRFEGVEAKY…EKGAFRALCD (229 aa). Position 1131 to 1138 (1131 to 1138) interacts with ATP; it reads GRTGAGKS. The N-linked (GlcNAc...) asparagine glycan is linked to asparagine 1227.

It belongs to the ABC transporter superfamily. ABCC family. Conjugate transporter (TC 3.A.1.208) subfamily.

The protein resides in the membrane. Functionally, multidrug resistance protein; part of the gene cluster that mediates the biosynthesis of siderophore ferrichrome A which is contributing to organismal virulence. The protein is Multidrug resistance protein fer6 of Mycosarcoma maydis (Corn smut fungus).